We begin with the raw amino-acid sequence, 541 residues long: 3-oxoacyl-[acyl-carrier-protein] synthase II, chloroplastic (541 aa).

The N-terminal 103 residues, 1–103, are a transit peptide targeting the chloroplast; sequence MVGASSSYAS…NRNQRRLNRA (103 aa). Residues 129 to 539 enclose the Ketosynthase family 3 (KS3) domain; that stretch reads QRRVVVTGMG…GHNSSIIFAP (411 aa). Residues C292, H432, and H468 each act as for beta-ketoacyl synthase activity in the active site.

Belongs to the thiolase-like superfamily. Beta-ketoacyl-ACP synthases family. Homodimer. Mostly expressed in siliques, and, to a lower extent, in leaves, stems, flower buds, and flowers.

Its subcellular location is the plastid. It is found in the chloroplast stroma. The enzyme catalyses a fatty acyl-[ACP] + malonyl-[ACP] + H(+) = a 3-oxoacyl-[ACP] + holo-[ACP] + CO2. In terms of biological role, essential protein that catalyzes the condensation reaction of fatty acid synthesis by the addition to an acyl acceptor of two carbons from malonyl-ACP. Specific for elongation from C-16 and C-16 to unsaturated C-18 fatty acids. Confers resistance to low temperatures by maintaining chloroplast membranes integrity. Involved in the regulation of fatty acids ratios during seed metabolism. Required for embryo development, especially at the transition from the globular to the heart stage. This is 3-oxoacyl-[acyl-carrier-protein] synthase II, chloroplastic (KAS2) from Arabidopsis thaliana (Mouse-ear cress).